A 644-amino-acid polypeptide reads, in one-letter code: Exoribonuclease 2 (644 aa).

The RNB domain maps to 189–516 (REDLTALDFV…NHRLLKAVIK (328 aa)). An S1 motif domain is found at 561-643 (GTRFAAEIVD…ETRGIIARPV (83 aa)).

Belongs to the RNR ribonuclease family. RNase II subfamily.

It is found in the cytoplasm. It catalyses the reaction Exonucleolytic cleavage in the 3'- to 5'-direction to yield nucleoside 5'-phosphates.. Its function is as follows. Involved in mRNA degradation. Hydrolyzes single-stranded polyribonucleotides processively in the 3' to 5' direction. In Shigella sonnei (strain Ss046), this protein is Exoribonuclease 2.